Reading from the N-terminus, the 140-residue chain is Organic hydroperoxide resistance protein-like (140 aa).

Belongs to the OsmC/Ohr family.

The chain is Organic hydroperoxide resistance protein-like from Staphylococcus aureus (strain bovine RF122 / ET3-1).